A 374-amino-acid polypeptide reads, in one-letter code: Lipoyl synthase, mitochondrial (374 aa).

Residues M1–F19 constitute a mitochondrion transit peptide. [4Fe-4S] cluster-binding residues include C103, C108, C114, C134, C138, C141, and S350. One can recognise a Radical SAM core domain in the interval E119–R339.

This sequence belongs to the radical SAM superfamily. Lipoyl synthase family. It depends on [4Fe-4S] cluster as a cofactor. In terms of tissue distribution, expressed in leaves and flowers, but not in roots. Expressed in roots, rosette leaves, cauline leaves, stems, flowers and siliques.

The protein localises to the mitochondrion. It catalyses the reaction [[Fe-S] cluster scaffold protein carrying a second [4Fe-4S](2+) cluster] + N(6)-octanoyl-L-lysyl-[protein] + 2 oxidized [2Fe-2S]-[ferredoxin] + 2 S-adenosyl-L-methionine + 4 H(+) = [[Fe-S] cluster scaffold protein] + N(6)-[(R)-dihydrolipoyl]-L-lysyl-[protein] + 4 Fe(3+) + 2 hydrogen sulfide + 2 5'-deoxyadenosine + 2 L-methionine + 2 reduced [2Fe-2S]-[ferredoxin]. It participates in protein modification; protein lipoylation via endogenous pathway; protein N(6)-(lipoyl)lysine from octanoyl-[acyl-carrier-protein]: step 2/2. Catalyzes the radical-mediated insertion of two sulfur atoms into the C-6 and C-8 positions of the octanoyl moiety bound to the lipoyl domains of lipoate-dependent enzymes, thereby converting the octanoylated domains into lipoylated derivatives. Together with LIP2 is essential for mitochondrial protein lipoylation during seed development. Required for the lipoylation of mitochondrial pyruvate dehydrogenase component E2 proteins in leaves and roots. The polypeptide is Lipoyl synthase, mitochondrial (Arabidopsis thaliana (Mouse-ear cress)).